Consider the following 553-residue polypeptide: Dihydroxy-acid dehydratase (553 aa).

Residue aspartate 78 coordinates Mg(2+). A [2Fe-2S] cluster-binding site is contributed by cysteine 119. The Mg(2+) site is built by aspartate 120 and lysine 121. An N6-carboxylysine modification is found at lysine 121. [2Fe-2S] cluster is bound at residue cysteine 192. Position 442 (glutamate 442) interacts with Mg(2+). Serine 468 functions as the Proton acceptor in the catalytic mechanism.

Belongs to the IlvD/Edd family. In terms of assembly, homodimer. It depends on [2Fe-2S] cluster as a cofactor. Mg(2+) is required as a cofactor.

The enzyme catalyses (2R)-2,3-dihydroxy-3-methylbutanoate = 3-methyl-2-oxobutanoate + H2O. It catalyses the reaction (2R,3R)-2,3-dihydroxy-3-methylpentanoate = (S)-3-methyl-2-oxopentanoate + H2O. Its pathway is amino-acid biosynthesis; L-isoleucine biosynthesis; L-isoleucine from 2-oxobutanoate: step 3/4. It functions in the pathway amino-acid biosynthesis; L-valine biosynthesis; L-valine from pyruvate: step 3/4. Its function is as follows. Functions in the biosynthesis of branched-chain amino acids. Catalyzes the dehydration of (2R,3R)-2,3-dihydroxy-3-methylpentanoate (2,3-dihydroxy-3-methylvalerate) into 2-oxo-3-methylpentanoate (2-oxo-3-methylvalerate) and of (2R)-2,3-dihydroxy-3-methylbutanoate (2,3-dihydroxyisovalerate) into 2-oxo-3-methylbutanoate (2-oxoisovalerate), the penultimate precursor to L-isoleucine and L-valine, respectively. In Campylobacter hominis (strain ATCC BAA-381 / DSM 21671 / CCUG 45161 / LMG 19568 / NCTC 13146 / CH001A), this protein is Dihydroxy-acid dehydratase.